Here is a 332-residue protein sequence, read N- to C-terminus: Phosphoenolpyruvate transferase (332 aa).

Aspartate 63 lines the 7,8-didemethyl-8-hydroxy-5-deazariboflavin pocket.

This sequence belongs to the CofD family. Homodimer. Requires Mg(2+) as cofactor.

It carries out the reaction enolpyruvoyl-2-diphospho-5'-guanosine + 7,8-didemethyl-8-hydroxy-5-deazariboflavin = dehydro coenzyme F420-0 + GMP + H(+). It functions in the pathway cofactor biosynthesis; coenzyme F420 biosynthesis. Catalyzes the transfer of the phosphoenolpyruvate moiety from enoylpyruvoyl-2-diphospho-5'-guanosine (EPPG) to 7,8-didemethyl-8-hydroxy-5-deazariboflavin (FO) with the formation of dehydro coenzyme F420-0 and GMP. The polypeptide is Phosphoenolpyruvate transferase (Nocardia farcinica (strain IFM 10152)).